Consider the following 131-residue polypeptide: Small ribosomal subunit protein uS8 (131 aa).

It belongs to the universal ribosomal protein uS8 family. As to quaternary structure, part of the 30S ribosomal subunit. Contacts proteins S5 and S12.

One of the primary rRNA binding proteins, it binds directly to 16S rRNA central domain where it helps coordinate assembly of the platform of the 30S subunit. In Pelodictyon phaeoclathratiforme (strain DSM 5477 / BU-1), this protein is Small ribosomal subunit protein uS8.